A 379-amino-acid polypeptide reads, in one-letter code: Alcohol dehydrogenase class-P (379 aa).

The residue at position 2 (serine 2) is an N-acetylserine. Zn(2+) is bound at residue cysteine 47. Threonine 49 is an an alcohol binding site. Threonine 49 contacts NAD(+). Residues aspartate 50, histidine 69, glutamate 70, cysteine 99, cysteine 102, cysteine 105, cysteine 113, and cysteine 177 each coordinate Zn(2+). Residue histidine 69 participates in an alcohol binding. Residues valine 206 and aspartate 226 each contribute to the NAD(+) site. Serine 229 carries the post-translational modification Phosphoserine. NAD(+) is bound by residues arginine 231, threonine 272, valine 295, valine 297, threonine 320, phenylalanine 322, and arginine 372.

This sequence belongs to the zinc-containing alcohol dehydrogenase family. Class-P subfamily. Homodimer. It depends on Zn(2+) as a cofactor. Post-translationally, glutathionylated. Root specific. Also detected in etiolated seedlings and leaves in cold conditions.

Its subcellular location is the cytoplasm. The catalysed reaction is a primary alcohol + NAD(+) = an aldehyde + NADH + H(+). It catalyses the reaction a secondary alcohol + NAD(+) = a ketone + NADH + H(+). The enzyme catalyses ethanol + NAD(+) = acetaldehyde + NADH + H(+). Its activity is regulated as follows. Alcohol dehydrogenase activity show inverse correlation with the decreasing availability of oxygen. Slightly repressed by thiol-modifying agents N-ethylmaleimide (NEM) and 5,5-dithio-bis-(2-nitrobenzoic acid) (DTNB), as well as by methyl methanethiosulfonate (MMTS) in a dose-dependent manner. Inhibited by hydrogen peroxide H(2)O(2). In terms of biological role, alcohol dehydrogenase catalyzing the reduction of toxic aldehydes to the corresponding alcohols. Mostly active on ethanol (EtOH), but exhibits broad substrate selectivity for primary and secondary alcohols (e.g. cinnamyl alcohol, octanol, geraniol, butanol, propyl alcohol, pentanol, isopentanol, ethylene glycol, isopropanol, methanol and tertiary butyl alcohol). Also catalyzes the reverse reaction to convert allyl alcohol to highly toxic acryl-aldehyde. Required for survival and acclimation in hypoxic conditions, especially in roots. Not able to catalyze NADH-dependent degradation of S-nitrosoglutathione (GSNO). This is Alcohol dehydrogenase class-P from Arabidopsis thaliana (Mouse-ear cress).